Reading from the N-terminus, the 335-residue chain is Acetyl-coenzyme A carboxylase carboxyl transferase subunit alpha (335 aa).

The region spanning 48 to 308 is the CoA carboxyltransferase C-terminal domain; it reads TLEKKVDALR…KGMLIEELKA (261 aa).

Belongs to the AccA family. Acetyl-CoA carboxylase is a heterohexamer composed of biotin carboxyl carrier protein (AccB), biotin carboxylase (AccC) and two subunits each of ACCase subunit alpha (AccA) and ACCase subunit beta (AccD).

The protein resides in the cytoplasm. The enzyme catalyses N(6)-carboxybiotinyl-L-lysyl-[protein] + acetyl-CoA = N(6)-biotinyl-L-lysyl-[protein] + malonyl-CoA. The protein operates within lipid metabolism; malonyl-CoA biosynthesis; malonyl-CoA from acetyl-CoA: step 1/1. Its function is as follows. Component of the acetyl coenzyme A carboxylase (ACC) complex. First, biotin carboxylase catalyzes the carboxylation of biotin on its carrier protein (BCCP) and then the CO(2) group is transferred by the carboxyltransferase to acetyl-CoA to form malonyl-CoA. This Chlorobium luteolum (strain DSM 273 / BCRC 81028 / 2530) (Pelodictyon luteolum) protein is Acetyl-coenzyme A carboxylase carboxyl transferase subunit alpha.